We begin with the raw amino-acid sequence, 449 residues long: Chlorobenzene dioxygenase subunit alpha (449 aa).

The Rieske domain maps to 54-163; that stretch reads WLLLGHETQI…VATYKGLIFA (110 aa). The [2Fe-2S] cluster site is built by C96, H98, C116, and H119. Residues H222, H228, and D376 each coordinate Fe cation.

This sequence belongs to the bacterial ring-hydroxylating dioxygenase alpha subunit family. This dioxygenase system consists of four proteins: the two subunits of the oxygenase component (TecA1 and TecA2), a ferredoxin (TecA3) and a ferredoxin reductase (TecA4). It depends on [2Fe-2S] cluster as a cofactor. The cofactor is Fe cation.

The catalysed reaction is chlorobenzene + NADH + O2 + H(+) = (1R,2R)-3-chlorocyclohexa-3,5-diene-1,2-diol + NAD(+). It participates in aromatic compound metabolism. Functionally, part of the oxygenase component of the chlorobenzene dioxygenase system that catalyzes the dihydroxylation of a range of aromatic compounds, including chlorinated benzenes and toluenes, and dinuclear aromatics such as biphenyl and dibenzo-p-dioxin. The alpha subunit is responsible for substrate specificity. The chain is Chlorobenzene dioxygenase subunit alpha from Cupriavidus sp. (strain PS12).